A 270-amino-acid polypeptide reads, in one-letter code: Phosphonoacetaldehyde hydrolase (270 aa).

Catalysis depends on Asp11, which acts as the Nucleophile. Mg(2+) contacts are provided by Asp11 and Ala13. Lys53 acts as the Schiff-base intermediate with substrate in catalysis. Asp187 contributes to the Mg(2+) binding site.

The protein belongs to the HAD-like hydrolase superfamily. PhnX family. In terms of assembly, homodimer. It depends on Mg(2+) as a cofactor.

It catalyses the reaction phosphonoacetaldehyde + H2O = acetaldehyde + phosphate + H(+). Functionally, involved in phosphonate degradation. This Salmonella paratyphi C (strain RKS4594) protein is Phosphonoacetaldehyde hydrolase.